A 481-amino-acid chain; its full sequence is Cysteine--tRNA ligase (481 aa).

A Zn(2+)-binding site is contributed by cysteine 29. The 'HIGH' region signature appears at 31-41 (VTVYDYCHIGH). Zn(2+)-binding residues include cysteine 209, histidine 234, and glutamate 238. Residues 266-270 (KMSKS) carry the 'KMSKS' region motif. Residue lysine 269 participates in ATP binding.

This sequence belongs to the class-I aminoacyl-tRNA synthetase family. In terms of assembly, monomer. Requires Zn(2+) as cofactor.

The protein localises to the cytoplasm. It catalyses the reaction tRNA(Cys) + L-cysteine + ATP = L-cysteinyl-tRNA(Cys) + AMP + diphosphate. The chain is Cysteine--tRNA ligase from Syntrophotalea carbinolica (strain DSM 2380 / NBRC 103641 / GraBd1) (Pelobacter carbinolicus).